A 271-amino-acid polypeptide reads, in one-letter code: Ribosomal RNA small subunit methyltransferase A (271 aa).

S-adenosyl-L-methionine-binding residues include histidine 11, leucine 13, glycine 38, glutamate 59, aspartate 84, and asparagine 109.

Belongs to the class I-like SAM-binding methyltransferase superfamily. rRNA adenine N(6)-methyltransferase family. RsmA subfamily.

It localises to the cytoplasm. It catalyses the reaction adenosine(1518)/adenosine(1519) in 16S rRNA + 4 S-adenosyl-L-methionine = N(6)-dimethyladenosine(1518)/N(6)-dimethyladenosine(1519) in 16S rRNA + 4 S-adenosyl-L-homocysteine + 4 H(+). In terms of biological role, specifically dimethylates two adjacent adenosines (A1518 and A1519) in the loop of a conserved hairpin near the 3'-end of 16S rRNA in the 30S particle. May play a critical role in biogenesis of 30S subunits. The protein is Ribosomal RNA small subunit methyltransferase A of Trichormus variabilis (strain ATCC 29413 / PCC 7937) (Anabaena variabilis).